The primary structure comprises 128 residues: uncharacterized protein (128 aa).

A run of 4 helical transmembrane segments spans residues 2–22, 34–54, 64–84, and 108–128; these read LPFY…LTVL, FLYD…AAVC, LPVL…ALFL, and LGLF…TLFL.

The protein localises to the cell membrane. This is an uncharacterized protein from Treponema pallidum (strain Nichols).